We begin with the raw amino-acid sequence, 127 residues long: Putative lipoprotein LprJ (127 aa).

Positions 1–34 (MTAHTHDGTRTWRTGRQATTLLALLAGVFGGAAS) are cleaved as a signal peptide. A lipid anchor (N-palmitoyl cysteine) is attached at Cys35. Cys35 carries S-diacylglycerol cysteine lipidation. Residues 35–99 (CAAPIQADMM…MAEINGMSRD (65 aa)) lie on the Extracellular side of the membrane. Residues 100 to 120 (MASTFTIVAIGTYCPAVIAPL) traverse the membrane as a helical segment. The Cytoplasmic portion of the chain corresponds to 121–127 (MPNRLQA).

In terms of assembly, may interact with sensor protein KdpD. Modified by Lgt on Cys-35 with an S-linked diacylglycerol, signal peptide is removed by LspA, modified by Lnt with amide-linked fatty acid.

The protein localises to the cell membrane. Overexpression induces expression of sensor protein kdpD gene at low K(+) concentrations (0 and 250 uM, tested in M.smegatis). The sequence is that of Putative lipoprotein LprJ (lprJ) from Mycobacterium tuberculosis (strain ATCC 25618 / H37Rv).